A 258-amino-acid chain; its full sequence is MLSRRIIPCLDVRDGRVVKGVKFRDHIDMGDIVELALRYRAQGADELVFYDIGASPEGRSVDYTWVERVARLIDIPFCVAGGIGDVETARAVLHAGADKISINSPALGRPQLISELADAFGVQCVVVGIDSIREEDGQWRVRRYTGDPSKTQALPMRTLDWVAEAQRLGAGEIVLNCMDNDGVRRGYDIAQLRQVRALCRVPLIASGGAGEMQHFADVFDQADVDGALAASVFHSGAIPIPELKRFLRAQQIEVRDGQ.

Active-site residues include Asp11 and Asp130.

Belongs to the HisA/HisF family. As to quaternary structure, heterodimer of HisH and HisF.

The protein localises to the cytoplasm. The enzyme catalyses 5-[(5-phospho-1-deoxy-D-ribulos-1-ylimino)methylamino]-1-(5-phospho-beta-D-ribosyl)imidazole-4-carboxamide + L-glutamine = D-erythro-1-(imidazol-4-yl)glycerol 3-phosphate + 5-amino-1-(5-phospho-beta-D-ribosyl)imidazole-4-carboxamide + L-glutamate + H(+). It participates in amino-acid biosynthesis; L-histidine biosynthesis; L-histidine from 5-phospho-alpha-D-ribose 1-diphosphate: step 5/9. In terms of biological role, IGPS catalyzes the conversion of PRFAR and glutamine to IGP, AICAR and glutamate. The HisF subunit catalyzes the cyclization activity that produces IGP and AICAR from PRFAR using the ammonia provided by the HisH subunit. This is Imidazole glycerol phosphate synthase subunit HisF from Xanthomonas euvesicatoria pv. vesicatoria (strain 85-10) (Xanthomonas campestris pv. vesicatoria).